Here is a 406-residue protein sequence, read N- to C-terminus: Putative odorant receptor 65b (406 aa).

At 1-55 (MDIQRFLKFYKVGWKTYRDPLMEASHSSIYYWREQMKAMALFTTTEERLLPYRSK) the chain is on the cytoplasmic side. A helical membrane pass occupies residues 56–76 (WHTLVYIQMVIFFASMSFGLT). Residues 77-88 (ESMGDHVQMGRD) lie on the Extracellular side of the membrane. A helical membrane pass occupies residues 89 to 109 (LAFILGAFFIIFKTYYFCWYG). The Cytoplasmic segment spans residues 110 to 144 (DELDQVISDLDALHPWAQKGPNPVEYQTGKRWYFV). The helical transmembrane segment at 145–165 (MAFFLATSWSFFLCILLLLLI) threads the bilayer. The Extracellular segment spans residues 166–218 (TSPMWVHQQNLPFHAAFPFQWHEKSLHPISHAIIYLFQSYFAVYCLTWLLCIE). The helical transmembrane segment at 219–239 (GLSICIYAEITFGIEVLCLEL) threads the bilayer. The Cytoplasmic portion of the chain corresponds to 240 to 275 (RQIHRHNYGLQELRMETNRLVKLHQKIVEILDRTND). A helical membrane pass occupies residues 276–296 (VFHGTLIMQMGVNFSLVSLSV). The Extracellular portion of the chain corresponds to 297 to 307 (LEAVEARKDPK). A helical transmembrane segment spans residues 308–328 (VVAQFAVLMLLALGHLSMWSY). Topologically, residues 329–381 (CGDQLSQKSLQISEAAYEAYDPTKGSKDVYRDLCVIIRRGQDPLIMRASPFPS) are cytoplasmic. A helical membrane pass occupies residues 382–402 (FNLINYSAILNQCYGILTFLL). The Extracellular portion of the chain corresponds to 403–406 (KTLD).

This sequence belongs to the insect chemoreceptor superfamily. Heteromeric odorant receptor channel (TC 1.A.69) family. Or49a subfamily. As to quaternary structure, interacts with Orco. Complexes exist early in the endomembrane system in olfactory sensory neurons (OSNs), coupling these complexes to the conserved ciliary trafficking pathway.

The protein resides in the cell membrane. Functionally, odorant receptor which mediates acceptance or avoidance behavior, depending on its substrates. The odorant receptor repertoire encodes a large collection of odor stimuli that vary widely in identity, intensity, and duration. May form a complex with Orco to form odorant-sensing units, providing sensitive and prolonged odorant signaling and calcium permeability. The chain is Putative odorant receptor 65b (Or65b) from Drosophila melanogaster (Fruit fly).